The sequence spans 320 residues: Ferrochelatase (320 aa).

Residues H194 and E275 each contribute to the Fe cation site.

This sequence belongs to the ferrochelatase family.

It is found in the cytoplasm. It carries out the reaction heme b + 2 H(+) = protoporphyrin IX + Fe(2+). The protein operates within porphyrin-containing compound metabolism; protoheme biosynthesis; protoheme from protoporphyrin-IX: step 1/1. Its function is as follows. Catalyzes the ferrous insertion into protoporphyrin IX. This chain is Ferrochelatase, found in Klebsiella pneumoniae (strain 342).